A 218-amino-acid polypeptide reads, in one-letter code: Phosphatidylserine decarboxylase proenzyme (218 aa).

S187 (schiff-base intermediate with substrate; via pyruvic acid) is an active-site residue. Residue S187 is modified to Pyruvic acid (Ser); by autocatalysis.

This sequence belongs to the phosphatidylserine decarboxylase family. PSD-A subfamily. In terms of assembly, heterodimer of a large membrane-associated beta subunit and a small pyruvoyl-containing alpha subunit. The cofactor is pyruvate. Post-translationally, is synthesized initially as an inactive proenzyme. Formation of the active enzyme involves a self-maturation process in which the active site pyruvoyl group is generated from an internal serine residue via an autocatalytic post-translational modification. Two non-identical subunits are generated from the proenzyme in this reaction, and the pyruvate is formed at the N-terminus of the alpha chain, which is derived from the carboxyl end of the proenzyme. The post-translation cleavage follows an unusual pathway, termed non-hydrolytic serinolysis, in which the side chain hydroxyl group of the serine supplies its oxygen atom to form the C-terminus of the beta chain, while the remainder of the serine residue undergoes an oxidative deamination to produce ammonia and the pyruvoyl prosthetic group on the alpha chain.

The protein resides in the cell membrane. It catalyses the reaction a 1,2-diacyl-sn-glycero-3-phospho-L-serine + H(+) = a 1,2-diacyl-sn-glycero-3-phosphoethanolamine + CO2. The protein operates within phospholipid metabolism; phosphatidylethanolamine biosynthesis; phosphatidylethanolamine from CDP-diacylglycerol: step 2/2. In terms of biological role, catalyzes the formation of phosphatidylethanolamine (PtdEtn) from phosphatidylserine (PtdSer). This chain is Phosphatidylserine decarboxylase proenzyme, found in Geobacter sulfurreducens (strain ATCC 51573 / DSM 12127 / PCA).